The primary structure comprises 393 residues: Probable acetyl-CoA acetyltransferase (393 aa).

C88 acts as the Acyl-thioester intermediate in catalysis. Active-site proton acceptor residues include H348 and C378.

It belongs to the thiolase-like superfamily. Thiolase family.

It is found in the cytoplasm. The enzyme catalyses 2 acetyl-CoA = acetoacetyl-CoA + CoA. This is Probable acetyl-CoA acetyltransferase (yqeF) from Escherichia coli (strain K12).